The following is a 229-amino-acid chain: MQRLKKFIAKREKGDKGKMKWNSSMDYDSPPSYQDVRRGIFPTAPLFGMEDDMMEFTPSLGIQTLKLQYKCVVNINAINPFRDFREAISAMQFWEADYSGYIGKKPFYRAIILHTARQLKTSNPGILDRGVVEYHATTQGRALVFHSLGPSPSMMFVPETFTREWNILTNKGTINVKIWLGETDTLSELEPILNPVNFRDDREMIEGAAIMGLEIKKQKDNTWLISKSH.

The dynamin binding signature appears at 2–4 (QRL). The short motif at 30-33 (PPSY) is the PPXY motif element. Residues 42–45 (PTAP) carry the PTAP/PSAP motif motif.

Belongs to the vesiculoviruses matrix protein family. In terms of assembly, homomultimer. Interacts with viral nucleocapsid; this interaction contributes to the virion assembly. Interacts with the viral envelope glycoprotein; this interaction contributes to the virion assembly. Interacts with host RAE1-NUP98 complex. Interacts with host NEDD4 and TSG101. Interacts with host dynamin. Interacts with host NDUFAF4; the interaction inhibits viral propagation and is independent of interferon activation. Interacts with host GTF2H5; the interaction may inhibit host transcription. Interacts with host DRG1. Interaction with host CTDNEP1. Interaction with host ABCE1. Phosphorylated by host.

The protein resides in the virion. It is found in the host endomembrane system. It localises to the host nucleus membrane. Its subcellular location is the host nucleus. The protein localises to the host cytoplasm. Functionally, forms a double layer around the helical nucleocapsid, the inner matrix layer binding to the N helix and the outer matrix layer binding to the envelope glycoprotein. Plays a major role in assembly and budding of virion, by recruiting cellular partners of the ESCRT complexes that play a key role in releasing the budding particle from the host membrane. Condensates the ribonucleocapsid core during virus assembly. Inhibits the host mRNA nuclear export thereby inducing the shut off of cellular transcription and preventing the interferon signaling and the establishment of antiviral state in infected cells. This shutoff presumably inhibits interferon signaling and thus establishment of antiviral state in virus infected cells. Induces cell-rounding, cytoskeleton disorganization and apoptosis in infected cell. Inhibits host transcription, possibly through interaction with host DNA repair factor IIH/TFIIH GTF2H5 subunit. The chain is Matrix protein (M) from Homo sapiens (Human).